The sequence spans 223 residues: DNA mismatch repair protein MutH (223 aa).

The protein belongs to the MutH family.

It is found in the cytoplasm. In terms of biological role, sequence-specific endonuclease that cleaves unmethylated GATC sequences. It is involved in DNA mismatch repair. The protein is DNA mismatch repair protein MutH of Haemophilus influenzae (strain ATCC 51907 / DSM 11121 / KW20 / Rd).